We begin with the raw amino-acid sequence, 363 residues long: Histone-lysine N-methyltransferase ASHH3 (363 aa).

In terms of domain architecture, AWS spans 63–114 (DDGIFCSCSSSSPGSSSTVCGSNCHCGMLFSSCSSSCKCGSECNNKPFQQRH). Residues 116 to 233 (KKMKLIQTEK…KGEHLTYDYQ (118 aa)) form the SET domain. Positions 239 to 255 (ADQDCHCGAVGCRRKLG) constitute a Post-SET domain.

The protein belongs to the class V-like SAM-binding methyltransferase superfamily. Histone-lysine methyltransferase family. SET2 subfamily.

It localises to the nucleus. It is found in the chromosome. The protein localises to the centromere. The catalysed reaction is L-lysyl-[histone] + S-adenosyl-L-methionine = N(6)-methyl-L-lysyl-[histone] + S-adenosyl-L-homocysteine + H(+). Its function is as follows. Histone methyltransferase. This Arabidopsis thaliana (Mouse-ear cress) protein is Histone-lysine N-methyltransferase ASHH3 (ASHH3).